Consider the following 102-residue polypeptide: UPF0235 protein Swol_0959 (102 aa).

This sequence belongs to the UPF0235 family.

The chain is UPF0235 protein Swol_0959 from Syntrophomonas wolfei subsp. wolfei (strain DSM 2245B / Goettingen).